The sequence spans 603 residues: Probable lysosomal cobalamin transporter (603 aa).

Helical transmembrane passes span Ile-13–Phe-33, Ile-50–Val-70, Ile-99–Ala-119, Ile-150–Ala-170, Leu-201–Leu-221, Leu-318–Thr-338, Gly-353–Ala-373, Ile-381–Val-401, and Ala-422–Val-442. Residue Asn-509 is glycosylated (N-linked (GlcNAc...) asparagine). Residues Val-512 to Phe-532 form a helical membrane-spanning segment. N-linked (GlcNAc...) asparagine glycosylation occurs at Asn-543. The interval Ala-578–Arg-603 is disordered. Residues His-585–Gly-595 show a composition bias toward gly residues. Asn-597 carries N-linked (GlcNAc...) asparagine glycosylation.

Belongs to the LIMR family. LMBRD1 subfamily.

It is found in the lysosome membrane. Functionally, probable lysosomal cobalamin transporter. Required to export cobalamin from lysosomes allowing its conversion to cofactors. The polypeptide is Probable lysosomal cobalamin transporter (Neurospora crassa (strain ATCC 24698 / 74-OR23-1A / CBS 708.71 / DSM 1257 / FGSC 987)).